Reading from the N-terminus, the 605-residue chain is Protein Spindly (605 aa).

Position 1 is an N-acetylmethionine (Met1). Residues 3-442 are a coiled coil; that stretch reads TDIVINLRCK…ELKLKYEPEE (440 aa). Residues Ser513, Ser515, and Ser555 each carry the phosphoserine modification. A disordered region spans residues 545–581; it reads LSERSGNTLNSPRLAAESKLQTEVKEGKETASKLEKE. Over residues 564–581 the composition is skewed to basic and acidic residues; sequence LQTEVKEGKETASKLEKE.

It belongs to the Spindly family. Interacts with KNTC1 and ZW10. These interactions appear weak and may be transient or indirect. Interacts with dynein intermediate chain and dynactin (DCTN1). Interacts with the catalytically active form of USP45. Post-translationally, monoubiquitinated with'Lys-48' linkage. Deubiquitinated by USP45.

The protein resides in the cytoplasm. It localises to the cytoskeleton. It is found in the microtubule organizing center. The protein localises to the centrosome. Its subcellular location is the chromosome. The protein resides in the centromere. It localises to the kinetochore. It is found in the nucleus. The protein localises to the spindle pole. Required for the localization of dynein and dynactin to the mitotic kintochore. Dynein is believed to control the initial lateral interaction between the kinetochore and spindle microtubules and to facilitate the subsequent formation of end-on kinetochore-microtubule attachments mediated by the NDC80 complex. Also required for correct spindle orientation. Does not appear to be required for the removal of spindle assembly checkpoint (SAC) proteins from the kinetochore upon bipolar spindle attachment. Acts as an adapter protein linking the dynein motor complex to various cargos and converts dynein from a non-processive to a highly processive motor in the presence of dynactin. Facilitates the interaction between dynein and dynactin and activates dynein processivity (the ability to move along a microtubule for a long distance without falling off the track). Plays a role in cell migration. This is Protein Spindly from Macaca fascicularis (Crab-eating macaque).